The following is a 302-amino-acid chain: Serine/threonine-protein phosphatase alpha-2 isoform (302 aa).

Residues D62, H64, D90, and N122 each contribute to the Mn(2+) site. H123 functions as the Proton donor in the catalytic mechanism. Residues H171 and H246 each coordinate Mn(2+).

It belongs to the PPP phosphatase family. PP-1 subfamily. As to quaternary structure, interacts with Nop17l. Interacts with uri; uri inhibits Pp1-87B phosphatase activity. Interacts with Rif1. The cofactor is Mn(2+).

It localises to the cytoplasm. The catalysed reaction is O-phospho-L-seryl-[protein] + H2O = L-seryl-[protein] + phosphate. It catalyses the reaction O-phospho-L-threonyl-[protein] + H2O = L-threonyl-[protein] + phosphate. Is essential for the regulation of mitotic chromosomal segregation as well as regulation of chromatin condensation during interphase. In Drosophila melanogaster (Fruit fly), this protein is Serine/threonine-protein phosphatase alpha-2 isoform (Pp1-87B).